Reading from the N-terminus, the 593-residue chain is Cryptochrome-2 (593 aa).

Residues 22–151 form the Photolyase/cryptochrome alpha/beta domain; the sequence is ASSVHWFRKG…EVVTENSHTL (130 aa). Lysine 30 participates in a covalent cross-link: Glycyl lysine isopeptide (Lys-Gly) (interchain with G-Cter in ubiquitin). Serine 90 carries the post-translational modification Phosphoserine. Residues lysine 126 and lysine 242 each participate in a glycyl lysine isopeptide (Lys-Gly) (interchain with G-Cter in ubiquitin) cross-link. Position 266 is a phosphoserine; by MAPK (serine 266). Serine 271 is a binding site for FAD. A Phosphoserine modification is found at serine 299. Glutamine 308 provides a ligand contact to FAD. Residue lysine 348 forms a Glycyl lysine isopeptide (Lys-Gly) (interchain with G-Cter in ubiquitin) linkage. Residues histidine 374 and 406-408 contribute to the FAD site; that span reads DAD. The segment at 390–489 is required for inhibition of CLOCK-BMAL1-mediated transcription; the sequence is WVSWESGVRV…IIGVDYPRPI (100 aa). Residues lysine 475 and lysine 504 each participate in a glycyl lysine isopeptide (Lys-Gly) (interchain with G-Cter in ubiquitin) cross-link. Residues 532-593 form a disordered region; that stretch reads PVAEPSSSQA…PTPELPSKDA (62 aa). The segment covering 537 to 548 has biased composition (low complexity); it reads SSSQAGSMSSAG. At serine 554 the chain carries Phosphoserine; by GSK3-beta. The residue at position 558 (serine 558) is a Phosphoserine; by DYRK1A and MAPK.

The protein belongs to the DNA photolyase class-1 family. Component of the circadian core oscillator, which includes the CRY proteins, CLOCK or NPAS2, BMAL1 or BMAL2, CSNK1D and/or CSNK1E, TIMELESS, and the PER proteins. Interacts with TIMELESS. Interacts directly with PER1, PER2 and PER3; interaction with PER2 inhibits its ubiquitination and vice versa. Interacts with CLOCK-BMAL1. Interacts with CLOCK. Interacts with BMAL1. Interacts with NFIL3. Interacts with FBXL3. Interacts with FBXL21. FBXL3, PER2 and the cofactor FAD compete for overlapping binding sites. FBXL3 cannot bind CRY2 that interacts already with PER2 or that contains bound FAD. Interacts with PPP5C (via TPR repeats); the interaction down-regulates the PPP5C phosphatase activity on CSNK1E. Interacts with nuclear receptors AR and NR3C1/GR; the interaction is ligand dependent. Interacts with PRKDC and CIART. Interacts with ISCA1 (in vitro). Interacts with DDB1, USP7 and TARDBP. Interacts with HNF4A. Interacts with PPARA. Interacts with PPARD (via domain NR LBD) and NR1I2 (via domain NR LBD) in a ligand-dependent manner. Interacts with PPARG, NR1I3 and VDR in a ligand-dependent manner. FAD is required as a cofactor. Requires (6R)-5,10-methylene-5,6,7,8-tetrahydrofolate as cofactor. Phosphorylation on Ser-266 by MAPK is important for the inhibition of CLOCK-BMAL1-mediated transcriptional activity. Phosphorylation by CSKNE requires interaction with PER1 or PER2. Phosphorylated in a circadian manner at Ser-554 and Ser-558 in the suprachiasmatic nucleus (SCN) and liver. Phosphorylation at Ser-558 by DYRK1A promotes subsequent phosphorylation at Ser-554 by GSK3-beta: the two-step phosphorylation at the neighboring Ser residues leads to its proteasomal degradation. In terms of processing, ubiquitinated by the SCF(FBXL3) and SCF(FBXL21) complexes, regulating the balance between degradation and stabilization. The SCF(FBXL3) complex is mainly nuclear and mediates ubiquitination and subsequent degradation of CRY2. In contrast, cytoplasmic SCF(FBXL21) complex-mediated ubiquitination leads to stabilize CRY2 and counteract the activity of the SCF(FBXL3) complex. The SCF(FBXL3) and SCF(FBXL21) complexes probably mediate ubiquitination at different Lys residues. The SCF(FBXL3) complex recognizes and binds CRY2 phosphorylated at Ser-554 and Ser-558. Ubiquitination may be inhibited by PER2. Deubiquitinated by USP7. Expressed in all tissues examined including fetal brain, fibroblasts, heart, brain, placenta, lung, liver, skeletal muscle, kidney, pancreas, spleen, thymus, prostate, testis, ovary, small intestine, colon and leukocytes. Highest levels in heart and skeletal muscle.

It is found in the cytoplasm. It localises to the nucleus. Its activity is regulated as follows. KL001 (N-[3-(9H-carbazol-9-yl)-2-hydroxypropyl]-N-(2-furanylmethyl)-methanesulfonamide) binds to CRY1 and stabilizes it by inhibiting FBXL3- and ubiquitin-dependent degradation of CRY1 resulting in lengthening of the circadian periods. Its function is as follows. Transcriptional repressor which forms a core component of the circadian clock. The circadian clock, an internal time-keeping system, regulates various physiological processes through the generation of approximately 24 hour circadian rhythms in gene expression, which are translated into rhythms in metabolism and behavior. It is derived from the Latin roots 'circa' (about) and 'diem' (day) and acts as an important regulator of a wide array of physiological functions including metabolism, sleep, body temperature, blood pressure, endocrine, immune, cardiovascular, and renal function. Consists of two major components: the central clock, residing in the suprachiasmatic nucleus (SCN) of the brain, and the peripheral clocks that are present in nearly every tissue and organ system. Both the central and peripheral clocks can be reset by environmental cues, also known as Zeitgebers (German for 'timegivers'). The predominant Zeitgeber for the central clock is light, which is sensed by retina and signals directly to the SCN. The central clock entrains the peripheral clocks through neuronal and hormonal signals, body temperature and feeding-related cues, aligning all clocks with the external light/dark cycle. Circadian rhythms allow an organism to achieve temporal homeostasis with its environment at the molecular level by regulating gene expression to create a peak of protein expression once every 24 hours to control when a particular physiological process is most active with respect to the solar day. Transcription and translation of core clock components (CLOCK, NPAS2, BMAL1, BMAL2, PER1, PER2, PER3, CRY1 and CRY2) plays a critical role in rhythm generation, whereas delays imposed by post-translational modifications (PTMs) are important for determining the period (tau) of the rhythms (tau refers to the period of a rhythm and is the length, in time, of one complete cycle). A diurnal rhythm is synchronized with the day/night cycle, while the ultradian and infradian rhythms have a period shorter and longer than 24 hours, respectively. Disruptions in the circadian rhythms contribute to the pathology of cardiovascular diseases, cancer, metabolic syndromes and aging. A transcription/translation feedback loop (TTFL) forms the core of the molecular circadian clock mechanism. Transcription factors, CLOCK or NPAS2 and BMAL1 or BMAL2, form the positive limb of the feedback loop, act in the form of a heterodimer and activate the transcription of core clock genes and clock-controlled genes (involved in key metabolic processes), harboring E-box elements (5'-CACGTG-3') within their promoters. The core clock genes: PER1/2/3 and CRY1/2 which are transcriptional repressors form the negative limb of the feedback loop and interact with the CLOCK|NPAS2-BMAL1|BMAL2 heterodimer inhibiting its activity and thereby negatively regulating their own expression. This heterodimer also activates nuclear receptors NR1D1/2 and RORA/B/G, which form a second feedback loop and which activate and repress BMAL1 transcription, respectively. CRY1 and CRY2 have redundant functions but also differential and selective contributions at least in defining the pace of the SCN circadian clock and its circadian transcriptional outputs. Less potent transcriptional repressor in cerebellum and liver than CRY1, though less effective in lengthening the period of the SCN oscillator. Seems to play a critical role in tuning SCN circadian period by opposing the action of CRY1. With CRY1, dispensable for circadian rhythm generation but necessary for the development of intercellular networks for rhythm synchrony. May mediate circadian regulation of cAMP signaling and gluconeogenesis by blocking glucagon-mediated increases in intracellular cAMP concentrations and in CREB1 phosphorylation. Besides its role in the maintenance of the circadian clock, is also involved in the regulation of other processes. Plays a key role in glucose and lipid metabolism modulation, in part, through the transcriptional regulation of genes involved in these pathways, such as LEP or ACSL4. Represses glucocorticoid receptor NR3C1/GR-induced transcriptional activity by binding to glucocorticoid response elements (GREs). Represses the CLOCK-BMAL1 induced transcription of BHLHE40/DEC1. Represses the CLOCK-BMAL1 induced transcription of NAMPT. Represses PPARD and its target genes in the skeletal muscle and limits exercise capacity. Represses the transcriptional activity of NR1I2. This chain is Cryptochrome-2 (CRY2), found in Homo sapiens (Human).